The primary structure comprises 156 residues: Small ribosomal subunit protein uS7c (156 aa).

It belongs to the universal ribosomal protein uS7 family. In terms of assembly, part of the 30S ribosomal subunit.

Its subcellular location is the plastid. The protein localises to the chloroplast. Functionally, one of the primary rRNA binding proteins, it binds directly to 16S rRNA where it nucleates assembly of the head domain of the 30S subunit. The polypeptide is Small ribosomal subunit protein uS7c (rps7) (Zamia furfuracea (Cardboard cycad)).